Consider the following 280-residue polypeptide: Urease accessory protein UreD (280 aa).

It belongs to the UreD family. As to quaternary structure, ureD, UreF and UreG form a complex that acts as a GTP-hydrolysis-dependent molecular chaperone, activating the urease apoprotein by helping to assemble the nickel containing metallocenter of UreC. The UreE protein probably delivers the nickel.

Its subcellular location is the cytoplasm. Its function is as follows. Required for maturation of urease via the functional incorporation of the urease nickel metallocenter. The polypeptide is Urease accessory protein UreD (Pseudomonas aeruginosa (strain UCBPP-PA14)).